Here is a 363-residue protein sequence, read N- to C-terminus: Pyrimidine monooxygenase RutA (363 aa).

Residues 49–50 (IK), N115, E124, 140–141 (RY), and S190 each bind FMN.

This sequence belongs to the NtaA/SnaA/DszA monooxygenase family. RutA subfamily.

The catalysed reaction is uracil + FMNH2 + NADH + O2 = (Z)-3-ureidoacrylate + FMN + NAD(+) + H2O + H(+). The enzyme catalyses thymine + FMNH2 + NADH + O2 = (Z)-2-methylureidoacrylate + FMN + NAD(+) + H2O + H(+). Its function is as follows. Catalyzes the pyrimidine ring opening between N-3 and C-4 by an unusual flavin hydroperoxide-catalyzed mechanism, adding oxygen atoms in the process to yield ureidoacrylate peracid, that immediately reacts with FMN forming ureidoacrylate and FMN-N(5)-oxide. The FMN-N(5)-oxide reacts spontaneously with NADH to produce FMN. Requires the flavin reductase RutF to regenerate FMN in vivo. This is Pyrimidine monooxygenase RutA from Enterobacter sp. (strain 638).